We begin with the raw amino-acid sequence, 38 residues long: Spheniscin-1 (38 aa).

3 disulfide bridges follow: cysteine 5–cysteine 33, cysteine 12–cysteine 27, and cysteine 17–cysteine 34.

Monomer. Secreted into the stomach cavity.

It is found in the secreted. Its function is as follows. Has antifungal activity and antibacterial activity against Gram-positive and Gram-negative bacteria. Involved in the process of food preservation in the stomach during the incubation fast. May also be present during infection. The protein is Spheniscin-1 of Aptenodytes patagonicus (King penguin).